Here is a 160-residue protein sequence, read N- to C-terminus: Probable nucleoside diphosphate kinase DDB_G0292928 (160 aa).

ATP is bound by residues Lys-12, Phe-61, Arg-103, Thr-109, Arg-122, and Asn-132. The active-site Pros-phosphohistidine intermediate is the His-135.

Belongs to the NDK family. Requires Mg(2+) as cofactor.

It carries out the reaction a 2'-deoxyribonucleoside 5'-diphosphate + ATP = a 2'-deoxyribonucleoside 5'-triphosphate + ADP. It catalyses the reaction a ribonucleoside 5'-diphosphate + ATP = a ribonucleoside 5'-triphosphate + ADP. In Dictyostelium discoideum (Social amoeba), this protein is Probable nucleoside diphosphate kinase DDB_G0292928.